Reading from the N-terminus, the 361-residue chain is Caspase activity and apoptosis inhibitor 1 (361 aa).

Residues Met1–Arg14 are compositionally biased toward basic residues. 2 disordered regions span residues Met1–Ile28 and Gly67–Gln100. Residues Ala19–Ile28 show a composition bias toward low complexity. A Phosphoserine modification is found at Ser89. Thr90 carries the phosphothreonine modification. Residue Lys104 forms a Glycyl lysine isopeptide (Lys-Gly) (interchain with G-Cter in SUMO2) linkage. Phosphoserine is present on residues Ser120 and Ser203. Disordered regions lie at residues Asp198–Asp218 and Ala230–Pro331. Residues Asn199 to Asp210 show a composition bias toward acidic residues. Over residues Arg234–Asp251 the composition is skewed to basic and acidic residues. The span at Glu272 to Glu281 shows a compositional bias: low complexity. The stretch at Glu281–Ser311 forms a coiled coil. Phosphoserine is present on Ser312.

As to expression, ubiquitous.

Functionally, anti-apoptotic protein that modulates a caspase-10 dependent mitochondrial caspase-3/9 feedback amplification loop. The chain is Caspase activity and apoptosis inhibitor 1 (CAAP1) from Homo sapiens (Human).